The sequence spans 797 residues: Inactive dipeptidyl peptidase 10 (797 aa).

The disordered stretch occupies residues 1–28 (MKQEQQPTPGARATQSQPADQELGSNSP). The Cytoplasmic segment spans residues 1–34 (MKQEQQPTPGARATQSQPADQELGSNSPPQRNWK). Residues 35-55 (GIAIALLVILVVCSLITMSVI) form a helical; Signal-anchor for type II membrane protein membrane-spanning segment. Residues 56-797 (LLTPDELTNS…VLPQEPEEDE (742 aa)) are Extracellular-facing. N64, N91, N112, and N120 each carry an N-linked (GlcNAc...) asparagine glycan. Phosphotyrosine occurs at positions 139 and 144. N-linked (GlcNAc...) asparagine glycans are attached at residues N258, N343, N518, and N749.

It belongs to the peptidase S9B family. DPPIV subfamily. May form oligomers. Interacts with KCND1 and KCND2. Post-translationally, N-glycosylation is important for cell surface expression, specially at Asn-258, which is crucial. Detected in brain cortex (at protein level). Expressed in the brain, predominantly by neurons and not by glia.

The protein localises to the cell membrane. Its function is as follows. Promotes cell surface expression of the potassium channel KCND2. Modulates the activity and gating characteristics of the potassium channel KCND2. Has no dipeptidyl aminopeptidase activity. The polypeptide is Inactive dipeptidyl peptidase 10 (Dpp10) (Mus musculus (Mouse)).